Consider the following 354-residue polypeptide: Virulence plasmid protein pGP2-D (354 aa).

The protein is Virulence plasmid protein pGP2-D of Chlamydia trachomatis serovar L2 (strain ATCC VR-902B / DSM 19102 / 434/Bu).